A 592-amino-acid chain; its full sequence is Cryptochrome-2 (592 aa).

A Photolyase/cryptochrome alpha/beta domain is found at 21 to 150 (ASSVHWFRKG…EVVTENSHTL (130 aa)). A Glycyl lysine isopeptide (Lys-Gly) (interchain with G-Cter in ubiquitin) cross-link involves residue lysine 29. Serine 89 carries the phosphoserine modification. Glycyl lysine isopeptide (Lys-Gly) (interchain with G-Cter in ubiquitin) cross-links involve residues lysine 125 and lysine 241. Serine 265 carries the phosphoserine; by MAPK modification. Position 270 (serine 270) interacts with FAD. A Phosphoserine modification is found at serine 298. FAD is bound at residue glutamine 307. A Glycyl lysine isopeptide (Lys-Gly) (interchain with G-Cter in ubiquitin) cross-link involves residue lysine 347. FAD-binding positions include histidine 373 and 405–407 (DAD). Positions 389–488 (WVSWESGVRV…IIGVDYPRPI (100 aa)) are required for inhibition of CLOCK-BMAL1-mediated transcription. Glycyl lysine isopeptide (Lys-Gly) (interchain with G-Cter in ubiquitin) cross-links involve residues lysine 474 and lysine 503. The segment at 532 to 592 (VAEPGSSQAG…PTQEPASKDS (61 aa)) is disordered. Polar residues predominate over residues 536 to 547 (GSSQAGSISNTG). A Phosphoserine; by GSK3-beta modification is found at serine 553. Serine 557 bears the Phosphoserine; by DYRK1A and MAPK mark. Residues 582 to 592 (MPTQEPASKDS) are compositionally biased toward polar residues.

This sequence belongs to the DNA photolyase class-1 family. In terms of assembly, component of the circadian core oscillator, which includes the CRY proteins, CLOCK or NPAS2, BMAL1 or BMAL2, CSNK1D and/or CSNK1E, TIMELESS, and the PER proteins. Interacts with TIMELESS. Interacts directly with PER1, PER2 and PER3; interaction with PER2 inhibits its ubiquitination and vice versa. Interacts with CLOCK-BMAL1. Interacts with BMAL1. Interacts with CLOCK. Interacts with NFIL3. Interacts with FBXL3 and FBXL21. FBXL3, PER2 and the cofactor FAD compete for overlapping binding sites. FBXL3 cannot bind CRY2 that interacts already with PER2 or that contains bound FAD. Interacts with PPP5C (via TPR repeats); the interaction down-regulates the PPP5C phosphatase activity on CSNK1E. Interacts with nuclear receptors AR and NR3C1/GR; the interaction is ligand dependent. Interacts with PRKDC. Interacts with CIART. Interacts with DDB1, USP7 and TARDBP. Interacts with HNF4A. Interacts with PPARA. Interacts with PPARG in a ligand-dependent manner. Interacts with PPARD (via domain NR LBD) in a ligand-dependent manner. Interacts with NR1I2 (via domain NR LBD) in a ligand-dependent manner. Interacts with NR1I3 and VDR in a ligand-dependent manner. FAD serves as cofactor. The cofactor is (6R)-5,10-methylene-5,6,7,8-tetrahydrofolate. In terms of processing, phosphorylation on Ser-265 by MAPK is important for the inhibition of CLOCK-BMAL1-mediated transcriptional activity. Phosphorylation by CSKNE requires interaction with PER1 or PER2. Phosphorylated in a circadian manner at Ser-553 and Ser-557 in the suprachiasmatic nucleus (SCN) and liver. Phosphorylation at Ser-557 by DYRK1A promotes subsequent phosphorylation at Ser-553 by GSK3-beta: the two-step phosphorylation at the neighboring Ser residues leads to its proteasomal degradation. Ubiquitinated by the SCF(FBXL3) and SCF(FBXL21) complexes, regulating the balance between degradation and stabilization. The SCF(FBXL3) complex is mainly nuclear and mediates ubiquitination and subsequent degradation of CRY2. In contrast, cytoplasmic SCF(FBXL21) complex-mediated ubiquitination leads to stabilize CRY2 and counteract the activity of the SCF(FBXL3) complex. The SCF(FBXL3) and SCF(FBXL21) complexes probably mediate ubiquitination at different Lys residues. The SCF(FBXL3) complex recognizes and binds CRY2 phosphorylated at Ser-553 and Ser-557. Ubiquitination may be inhibited by PER2. Deubiquitinated by USP7. As to expression, expression in the retina is restricted to the photoreceptor layer (at protein level). Expressed in all tissues examined including heart, brain, spleen, lung, liver, skeletal muscle, kidney and testis. Weak expression in spleen.

Its subcellular location is the cytoplasm. The protein localises to the nucleus. KL001 (N-[3-(9H-carbazol-9-yl)-2-hydroxypropyl]-N-(2-furanylmethyl)-methanesulfonamide) binds to CRY1 and stabilizes it by inhibiting FBXL3- and ubiquitin-dependent degradation of CRY1 resulting in lengthening of the circadian periods. KL001-mediated CRY1 stabilization can inhibit glucagon-induced gluconeogenesis in primary hepatocytes. Its function is as follows. Transcriptional repressor which forms a core component of the circadian clock. The circadian clock, an internal time-keeping system, regulates various physiological processes through the generation of approximately 24 hour circadian rhythms in gene expression, which are translated into rhythms in metabolism and behavior. It is derived from the Latin roots 'circa' (about) and 'diem' (day) and acts as an important regulator of a wide array of physiological functions including metabolism, sleep, body temperature, blood pressure, endocrine, immune, cardiovascular, and renal function. Consists of two major components: the central clock, residing in the suprachiasmatic nucleus (SCN) of the brain, and the peripheral clocks that are present in nearly every tissue and organ system. Both the central and peripheral clocks can be reset by environmental cues, also known as Zeitgebers (German for 'timegivers'). The predominant Zeitgeber for the central clock is light, which is sensed by retina and signals directly to the SCN. The central clock entrains the peripheral clocks through neuronal and hormonal signals, body temperature and feeding-related cues, aligning all clocks with the external light/dark cycle. Circadian rhythms allow an organism to achieve temporal homeostasis with its environment at the molecular level by regulating gene expression to create a peak of protein expression once every 24 hours to control when a particular physiological process is most active with respect to the solar day. Transcription and translation of core clock components (CLOCK, NPAS2, BMAL1, BMAL2, PER1, PER2, PER3, CRY1 and CRY2) plays a critical role in rhythm generation, whereas delays imposed by post-translational modifications (PTMs) are important for determining the period (tau) of the rhythms (tau refers to the period of a rhythm and is the length, in time, of one complete cycle). A diurnal rhythm is synchronized with the day/night cycle, while the ultradian and infradian rhythms have a period shorter and longer than 24 hours, respectively. Disruptions in the circadian rhythms contribute to the pathology of cardiovascular diseases, cancer, metabolic syndromes and aging. A transcription/translation feedback loop (TTFL) forms the core of the molecular circadian clock mechanism. Transcription factors, CLOCK or NPAS2 and BMAL1 or BMAL2, form the positive limb of the feedback loop, act in the form of a heterodimer and activate the transcription of core clock genes and clock-controlled genes (involved in key metabolic processes), harboring E-box elements (5'-CACGTG-3') within their promoters. The core clock genes: PER1/2/3 and CRY1/2 which are transcriptional repressors form the negative limb of the feedback loop and interact with the CLOCK|NPAS2-BMAL1|BMAL2 heterodimer inhibiting its activity and thereby negatively regulating their own expression. This heterodimer also activates nuclear receptors NR1D1/2 and RORA/B/G, which form a second feedback loop and which activate and repress BMAL1 transcription, respectively. CRY1 and CRY2 have redundant functions but also differential and selective contributions at least in defining the pace of the SCN circadian clock and its circadian transcriptional outputs. Less potent transcriptional repressor in cerebellum and liver than CRY1, though less effective in lengthening the period of the SCN oscillator. Seems to play a critical role in tuning SCN circadian period by opposing the action of CRY1. With CRY1, dispensable for circadian rhythm generation but necessary for the development of intercellular networks for rhythm synchrony. May mediate circadian regulation of cAMP signaling and gluconeogenesis by blocking glucagon-mediated increases in intracellular cAMP concentrations and in CREB1 phosphorylation. Besides its role in the maintenance of the circadian clock, is also involved in the regulation of other processes. Plays a key role in glucose and lipid metabolism modulation, in part, through the transcriptional regulation of genes involved in these pathways, such as LEP or ACSL4. Represses glucocorticoid receptor NR3C1/GR-induced transcriptional activity by binding to glucocorticoid response elements (GREs). Represses the CLOCK-BMAL1 induced transcription of BHLHE40/DEC1 and NAMPT. Represses PPARD and its target genes in the skeletal muscle and limits exercise capacity. Represses the transcriptional activity of NR1I2. The sequence is that of Cryptochrome-2 (Cry2) from Mus musculus (Mouse).